Reading from the N-terminus, the 85-residue chain is Photosystem I reaction center subunit PsaK (85 aa).

A run of 2 helical transmembrane segments spans residues 13–33 (VSWTPKVALVMIICNVIAIAI) and 59–79 (GAMLGCTSFGHLLGMGAILGL).

It belongs to the PsaG/PsaK family.

Its subcellular location is the cellular thylakoid membrane. The polypeptide is Photosystem I reaction center subunit PsaK (Synechococcus sp. (strain WH7803)).